A 193-amino-acid polypeptide reads, in one-letter code: Putative manganese efflux pump MntP (193 aa).

6 helical membrane-spanning segments follow: residues 3-23, 39-59, 65-85, 113-133, 138-158, and 173-193; these read LATL…AALG, VGAY…ALGL, IAAF…GHMV, LALA…GLAV, ILMA…GGVL, and VLGG…HLSA.

This sequence belongs to the MntP (TC 9.B.29) family.

It is found in the cell inner membrane. Probably functions as a manganese efflux pump. In Rhodospirillum rubrum (strain ATCC 11170 / ATH 1.1.1 / DSM 467 / LMG 4362 / NCIMB 8255 / S1), this protein is Putative manganese efflux pump MntP.